The sequence spans 288 residues: ATP synthase gamma chain (288 aa).

This sequence belongs to the ATPase gamma chain family. As to quaternary structure, F-type ATPases have 2 components, CF(1) - the catalytic core - and CF(0) - the membrane proton channel. CF(1) has five subunits: alpha(3), beta(3), gamma(1), delta(1), epsilon(1). CF(0) has three main subunits: a, b and c.

The protein resides in the cell inner membrane. In terms of biological role, produces ATP from ADP in the presence of a proton gradient across the membrane. The gamma chain is believed to be important in regulating ATPase activity and the flow of protons through the CF(0) complex. The chain is ATP synthase gamma chain from Rickettsia canadensis (strain McKiel).